The primary structure comprises 178 residues: Large ribosomal subunit protein uL10 (178 aa).

The protein belongs to the universal ribosomal protein uL10 family. In terms of assembly, part of the ribosomal stalk of the 50S ribosomal subunit. The N-terminus interacts with L11 and the large rRNA to form the base of the stalk. The C-terminus forms an elongated spine to which L12 dimers bind in a sequential fashion forming a multimeric L10(L12)X complex.

In terms of biological role, forms part of the ribosomal stalk, playing a central role in the interaction of the ribosome with GTP-bound translation factors. The protein is Large ribosomal subunit protein uL10 of Gloeothece citriformis (strain PCC 7424) (Cyanothece sp. (strain PCC 7424)).